A 588-amino-acid polypeptide reads, in one-letter code: Adenine deaminase (588 aa).

It belongs to the metallo-dependent hydrolases superfamily. Adenine deaminase family. Homodimer. The cofactor is Mn(2+).

It catalyses the reaction adenine + H2O + H(+) = hypoxanthine + NH4(+). The protein is Adenine deaminase of Escherichia coli O139:H28 (strain E24377A / ETEC).